The following is a 273-amino-acid chain: Putative pyruvate, phosphate dikinase regulatory protein (273 aa).

Residue 153 to 160 (GISRTSKT) participates in ADP binding.

This sequence belongs to the pyruvate, phosphate/water dikinase regulatory protein family. PDRP subfamily.

The catalysed reaction is N(tele)-phospho-L-histidyl/L-threonyl-[pyruvate, phosphate dikinase] + ADP = N(tele)-phospho-L-histidyl/O-phospho-L-threonyl-[pyruvate, phosphate dikinase] + AMP + H(+). It catalyses the reaction N(tele)-phospho-L-histidyl/O-phospho-L-threonyl-[pyruvate, phosphate dikinase] + phosphate + H(+) = N(tele)-phospho-L-histidyl/L-threonyl-[pyruvate, phosphate dikinase] + diphosphate. Functionally, bifunctional serine/threonine kinase and phosphorylase involved in the regulation of the pyruvate, phosphate dikinase (PPDK) by catalyzing its phosphorylation/dephosphorylation. The sequence is that of Putative pyruvate, phosphate dikinase regulatory protein from Rhizobium etli (strain CIAT 652).